A 190-amino-acid chain; its full sequence is Protein LIGHT-DEPENDENT SHORT HYPOCOTYLS 1 (190 aa).

A compositionally biased stretch (polar residues) spans 1-26; sequence MDLISHQPNKNPNSSTQLTPPSSSRY. 2 disordered regions span residues 1 to 28 and 145 to 190; these read MDLI…RYEN and GVSY…GATV. In terms of domain architecture, ALOG spans 25-152; sequence RYENQKRRDW…ARGVSYEKKR (128 aa). Positions 150–154 match the Nuclear localization signal motif; sequence KKRKR. Over residues 158–179 the composition is skewed to low complexity; sequence QKPQTQPPLQLQQQQQQPQQGQ. A compositionally biased stretch (polar residues) spans 180 to 190; it reads SMMANYSGATV.

It belongs to the plant homeotic and developmental regulators ALOG protein family. As to expression, expressed in hypocotyls, shoot apices and lateral root primordia and, weakly, in vascular tissues.

The protein resides in the nucleus. Its function is as follows. Probable transcription regulator that acts as a developmental regulator by promoting cell growth in response to continuous red (cR), far-red (cFR) and blue (cB) light in a phytochrome-dependent manner, at least during seedling development. The sequence is that of Protein LIGHT-DEPENDENT SHORT HYPOCOTYLS 1 (LSH1) from Arabidopsis thaliana (Mouse-ear cress).